A 201-amino-acid polypeptide reads, in one-letter code: 3-isopropylmalate dehydratase small subunit (201 aa).

This sequence belongs to the LeuD family. LeuD type 1 subfamily. In terms of assembly, heterodimer of LeuC and LeuD.

It carries out the reaction (2R,3S)-3-isopropylmalate = (2S)-2-isopropylmalate. The protein operates within amino-acid biosynthesis; L-leucine biosynthesis; L-leucine from 3-methyl-2-oxobutanoate: step 2/4. Its function is as follows. Catalyzes the isomerization between 2-isopropylmalate and 3-isopropylmalate, via the formation of 2-isopropylmaleate. The polypeptide is 3-isopropylmalate dehydratase small subunit (Rhodopseudomonas palustris (strain ATCC BAA-98 / CGA009)).